The following is a 512-amino-acid chain: Bifunctional purine biosynthesis protein PurH (512 aa).

One can recognise an MGS-like domain in the interval 1 to 144; it reads MKRALVSVSD…KNYHDVTIVV (144 aa).

The protein belongs to the PurH family.

The enzyme catalyses (6R)-10-formyltetrahydrofolate + 5-amino-1-(5-phospho-beta-D-ribosyl)imidazole-4-carboxamide = 5-formamido-1-(5-phospho-D-ribosyl)imidazole-4-carboxamide + (6S)-5,6,7,8-tetrahydrofolate. It carries out the reaction IMP + H2O = 5-formamido-1-(5-phospho-D-ribosyl)imidazole-4-carboxamide. The protein operates within purine metabolism; IMP biosynthesis via de novo pathway; 5-formamido-1-(5-phospho-D-ribosyl)imidazole-4-carboxamide from 5-amino-1-(5-phospho-D-ribosyl)imidazole-4-carboxamide (10-formyl THF route): step 1/1. It functions in the pathway purine metabolism; IMP biosynthesis via de novo pathway; IMP from 5-formamido-1-(5-phospho-D-ribosyl)imidazole-4-carboxamide: step 1/1. The sequence is that of Bifunctional purine biosynthesis protein PurH from Limosilactobacillus reuteri (strain DSM 20016) (Lactobacillus reuteri).